Reading from the N-terminus, the 188-residue chain is U1 small nuclear ribonucleoprotein C-2 (188 aa).

Residues 4 to 36 (YYCDYCDVFLVSESPSVRKAHNSGRNHLTNVRD) form a Matrin-type zinc finger. The disordered stretch occupies residues 57-188 (FETGGGNSTS…MNPDRARQLG (132 aa)). Residues 72–82 (GNPPGSQPGPP) show a composition bias toward pro residues. Over residues 109–124 (AMLALMNGQNGMSSPG) the composition is skewed to low complexity. The span at 125 to 141 (SGPPPMRFAGPPIPNNM) shows a compositional bias: pro residues.

Belongs to the U1 small nuclear ribonucleoprotein C family. U1 snRNP is composed of the 7 core Sm proteins B/B', D1, D2, D3, E, F and G that assemble in a heptameric protein ring on the Sm site of the small nuclear RNA to form the core snRNP, and at least 3 U1 snRNP-specific proteins U1-70K, U1-A and U1-C. U1-C interacts with U1 snRNA and the 5' splice-site region of the pre-mRNA.

It localises to the nucleus. Functionally, component of the spliceosomal U1 snRNP, which is essential for recognition of the pre-mRNA 5' splice-site and the subsequent assembly of the spliceosome. U1-C is directly involved in initial 5' splice-site recognition for both constitutive and regulated alternative splicing. The interaction with the 5' splice-site seems to precede base-pairing between the pre-mRNA and the U1 snRNA. Stimulates commitment or early (E) complex formation by stabilizing the base pairing of the 5' end of the U1 snRNA and the 5' splice-site region. The chain is U1 small nuclear ribonucleoprotein C-2 from Puccinia graminis f. sp. tritici (strain CRL 75-36-700-3 / race SCCL) (Black stem rust fungus).